A 620-amino-acid polypeptide reads, in one-letter code: MRRSVCYVNPSIARAGQISTWKFLYSLATPLPAGTKCKFDLAGSGKPTDWEAPATDLSQTRNVIYAEMPEGEIIEATAIPVKDNPVPQFEFTLPYELQVGETLTIVMGASPNHPQVDDAGNGAQLFAQRRKPFYLYIDPTGEGNYDEPDVFSMDIRGNVLKKIEIFTPSYVVKNKRFDITVRFEDEFGNLTNFSPEETRIELSYEHLRENLNWQLFIPETGFVILPNLYFNEPGIYRIQLKNLSTQEIFISAPIKCFADSAPNLMWGLLHGESERVDSEENIETCMRYFRDDRALNFYASSSFENQENLSPDIWKLINQTVSDFNEEDRFITLSGFQYSGEPHLEGVRHILHTKETKSHSKHKEYKHIPLAKLYKSTVNHDMISIPSFTASKEHGFDFENFYPEFERVVEIYNAWGSSETTAALNNPFPIQGKDSEDPRGTVIEGLKKNLRFGFVAGGLDDRGIYKDYFDSPQVQYSPGLTAIICNKYTRESLVEALFARHCYATTGPRIVLSFNITSAPMGSELSTGSKPGLNVNRHISGHVAGTALLKTVEIIRNGEVLHTFFPDSNNLDYEYDDMVPLSSVTLKDPNGKAPFVFYYLRVTQADNAMAWSSPIWVDLN.

It belongs to the chlamydial CPn_0512/CT_425/TC_0708 family.

This is an uncharacterized protein from Chlamydia pneumoniae (Chlamydophila pneumoniae).